We begin with the raw amino-acid sequence, 614 residues long: UvrABC system protein C (614 aa).

A GIY-YIG domain is found at 26-104; it reads NLPGVYKMLG…IKEHRPPYNV (79 aa). The UVR domain maps to 215–250; it reads SDIHTTLIEKMEHSAEALDFEKAAFYRDQLSMLREV.

The protein belongs to the UvrC family. Interacts with UvrB in an incision complex.

The protein localises to the cytoplasm. Its function is as follows. The UvrABC repair system catalyzes the recognition and processing of DNA lesions. UvrC both incises the 5' and 3' sides of the lesion. The N-terminal half is responsible for the 3' incision and the C-terminal half is responsible for the 5' incision. This is UvrABC system protein C from Psychrobacter sp. (strain PRwf-1).